We begin with the raw amino-acid sequence, 163 residues long: Phosphopantetheine adenylyltransferase (163 aa).

A substrate-binding site is contributed by Ser-10. ATP is bound by residues 10–11 (SF) and His-18. Lys-42, Leu-74, and Arg-88 together coordinate substrate. Residues 89–91 (GLR), Glu-99, and 124–130 (YSFLSSS) contribute to the ATP site.

This sequence belongs to the bacterial CoaD family. As to quaternary structure, homohexamer. Requires Mg(2+) as cofactor.

It localises to the cytoplasm. The catalysed reaction is (R)-4'-phosphopantetheine + ATP + H(+) = 3'-dephospho-CoA + diphosphate. The protein operates within cofactor biosynthesis; coenzyme A biosynthesis; CoA from (R)-pantothenate: step 4/5. Reversibly transfers an adenylyl group from ATP to 4'-phosphopantetheine, yielding dephospho-CoA (dPCoA) and pyrophosphate. The chain is Phosphopantetheine adenylyltransferase from Bacillus mycoides (strain KBAB4) (Bacillus weihenstephanensis).